A 526-amino-acid polypeptide reads, in one-letter code: MAPKRRAPPASQPADGGKKAKGGQEEEEDAWSSALNALKTAPREKPPATIDGQCPLSAGPDAKVYEDYDCTLNQTNISANNNKFYIIQLIEHGGTYSTWNRWGRVGEVGQSKLLPFTSLEAAKKDFEKKFWEKTKNRWAARDNFVAQPGKYTLIEVQPGAGQEVALRVDGAGDEKVSKRRVLPCALDETTQKLVALIFSSDMFRHAMQAMNIDVKKMPLGKLSKQQIARGFEALEELEAALGEQPRSMSRLEELSSRFYTIVPHNFGRARPPPIDSPELLRAKKDMLLVLADIEVAQSLQAQKVEEEEVVAHPLDRDYALLCCQLTLLEDTSQEYEMILNYVAQTGGQVYVLNVWRVAREGEDKLFQAHDHLEHRRLLWHGTNVAVVAAILKNGLRIMPHSGGRVGKGIYFASENSKSACYVGCTSKRVGLMFLTEVALGKPYCITRDEPTLQQPPNGYDSVQACGRTEPDPAQDVEVTLDGKKVLVCQGKPIPMPAYKDSSFFQSEYLIYQESQCRIRYLVQLHF.

Positions Met-1 to Pro-55 are disordered. In terms of domain architecture, WGR spans Asp-61–Tyr-151. One can recognise a PARP alpha-helical domain in the interval Pro-183–Ala-301. Residues His-312 to Phe-526 form the PARP catalytic domain.

This sequence belongs to the ARTD/PARP family.

It localises to the nucleus. The protein localises to the chromosome. It is found in the cytoplasm. Its subcellular location is the cytoskeleton. The protein resides in the microtubule organizing center. It localises to the centrosome. The protein localises to the centriole. It catalyses the reaction L-aspartyl-[protein] + NAD(+) = 4-O-(ADP-D-ribosyl)-L-aspartyl-[protein] + nicotinamide. The catalysed reaction is L-glutamyl-[protein] + NAD(+) = 5-O-(ADP-D-ribosyl)-L-glutamyl-[protein] + nicotinamide. It carries out the reaction L-lysyl-[protein] + NAD(+) = N(6)-(ADP-D-ribosyl)-L-lysyl-[protein] + nicotinamide + H(+). Functionally, mono-ADP-ribosyltransferase that mediates mono-ADP-ribosylation of target proteins and plays a key role in the response to DNA damage. Mediates mono-ADP-ribosylation of glutamate, aspartate or lysine residues on target proteins. In contrast to PARP1 and PARP2, it is not able to mediate poly-ADP-ribosylation. Involved in DNA repair by mediating mono-ADP-ribosylation of a limited number of acceptor proteins involved in chromatin architecture and in DNA metabolism, such as histone H2B, XRCC5 and XRCC6. ADP-ribosylation follows DNA damage and appears as an obligatory step in a detection/signaling pathway leading to the reparation of DNA strand breaks. Involved in single-strand break repair by catalyzing mono-ADP-ribosylation of histone H2B on 'Glu-2' (H2BE2ADPr) of nucleosomes containing nicked DNA. Cooperates with the XRCC5-XRCC6 (Ku80-Ku70) heterodimer to limit end-resection thereby promoting accurate NHEJ. Associates with a number of DNA repair factors and is involved in the response to exogenous and endogenous DNA strand breaks. Together with APLF, promotes the retention of the LIG4-XRCC4 complex on chromatin and accelerate DNA ligation during non-homologous end-joining (NHEJ). In addition to proteins, also able to ADP-ribosylate DNA: mediates DNA mono-ADP-ribosylation of DNA strand break termini via covalent addition of a single ADP-ribose moiety to a 5'- or 3'-terminal phosphate residues in DNA containing multiple strand breaks. In Gallus gallus (Chicken), this protein is Protein mono-ADP-ribosyltransferase PARP3.